The primary structure comprises 126 residues: Large ribosomal subunit protein bL12 (126 aa).

It belongs to the bacterial ribosomal protein bL12 family. As to quaternary structure, homodimer. Part of the ribosomal stalk of the 50S ribosomal subunit. Forms a multimeric L10(L12)X complex, where L10 forms an elongated spine to which 2 to 4 L12 dimers bind in a sequential fashion. Binds GTP-bound translation factors.

In terms of biological role, forms part of the ribosomal stalk which helps the ribosome interact with GTP-bound translation factors. Is thus essential for accurate translation. This is Large ribosomal subunit protein bL12 from Methylobacterium nodulans (strain LMG 21967 / CNCM I-2342 / ORS 2060).